Here is a 423-residue protein sequence, read N- to C-terminus: Ferrochelatase, mitochondrial (423 aa).

A mitochondrion-targeting transit peptide spans 1–54; it reads MRSLGANMAAALRAAGVLLRDPLVSSSWRVYQPWRWKSVAAAAAATTETAQHAQ. Lys57 is modified (N6-acetyllysine). Protoporphyrin IX contacts are provided by Arg115, Tyr123, and Ser130. An N6-succinyllysine modification is found at Lys138. A [2Fe-2S] cluster-binding site is contributed by Cys196. Active-site residues include His230 and Asp383. [2Fe-2S] cluster-binding residues include Cys403, Cys406, and Cys411. Lys415 bears the N6-acetyllysine; alternate mark. N6-succinyllysine; alternate is present on Lys415.

This sequence belongs to the ferrochelatase family. Homodimer. Homotetramer. Interaction with PGRMC1; the interaction results in decreased FECH activity. Interacts with ABCB10 and SLC25A37; this interaction forms an oligomeric complex. Forms a complex with ABCB7 and ABCB10, where a dimeric FECH bridges ABCB7 and ABCB10 homodimers; this complex may be required for cellular iron homeostasis, mitochondrial function and heme biosynthesis. Interacts with ABCB7 and ABCB10. Requires [2Fe-2S] cluster as cofactor.

It localises to the mitochondrion inner membrane. The catalysed reaction is heme b + 2 H(+) = protoporphyrin IX + Fe(2+). Its pathway is porphyrin-containing compound metabolism; protoheme biosynthesis; protoheme from protoporphyrin-IX: step 1/1. In terms of biological role, catalyzes the ferrous insertion into protoporphyrin IX and participates in the terminal step in the heme biosynthetic pathway. This chain is Ferrochelatase, mitochondrial, found in Pan troglodytes (Chimpanzee).